Reading from the N-terminus, the 394-residue chain is ATP phosphoribosyltransferase regulatory subunit (394 aa).

It belongs to the class-II aminoacyl-tRNA synthetase family. HisZ subfamily. In terms of assembly, heteromultimer composed of HisG and HisZ subunits.

The protein localises to the cytoplasm. Its pathway is amino-acid biosynthesis; L-histidine biosynthesis; L-histidine from 5-phospho-alpha-D-ribose 1-diphosphate: step 1/9. Functionally, required for the first step of histidine biosynthesis. May allow the feedback regulation of ATP phosphoribosyltransferase activity by histidine. The chain is ATP phosphoribosyltransferase regulatory subunit from Geobacillus kaustophilus (strain HTA426).